The sequence spans 522 residues: GMP synthase [glutamine-hydrolyzing] (522 aa).

Residues 9 to 204 form the Glutamine amidotransferase type-1 domain; that stretch reads KILILDFGAQ…VVDICGCQTL (196 aa). The active-site Nucleophile is the Cys-86. Residues His-178 and Glu-180 contribute to the active site. A GMPS ATP-PPase domain is found at 205-397; the sequence is WTSANIIEDQ…LGLPHAMVYR (193 aa). Residue 232–238 coordinates ATP; it reads SGGVDSS.

Homodimer.

It carries out the reaction XMP + L-glutamine + ATP + H2O = GMP + L-glutamate + AMP + diphosphate + 2 H(+). Its pathway is purine metabolism; GMP biosynthesis; GMP from XMP (L-Gln route): step 1/1. Functionally, catalyzes the synthesis of GMP from XMP. In Xylella fastidiosa (strain M23), this protein is GMP synthase [glutamine-hydrolyzing].